A 345-amino-acid chain; its full sequence is Telomere-binding protein cav (345 aa).

Positions 115–337 (RRKMVQPYPE…TITFQNTESE (223 aa)) are required for binding to Su(var)205. Disordered stretches follow at residues 145–180 (RLDR…HEDQ) and 200–231 (PPGV…INRP). 2 consecutive short sequence motifs (su(var)205-binding Pro-containing repeat) follow at residues 231–237 (PETEINE) and 298–304 (PETEMNE).

Component of the HipHop-HOAP telomere capping complex, composed of at least HipHop and cav/HOAP, and may include Su(var)205/HP1; HipHop and cav/HOAP, but not Su(var)205, are interdependent for their protein stability. Interacts with HipHop (via N-terminus). Interacts (via C-terminus) with Su(var)205/HP1 dimer (via hinge and chromoshadow domain) and Orc1; possibly interacts with other components of the origin recognition complex (ORC). Each molecule of cav/HOAP interacts with 2 molecules of Su(var)205/HP1. The HipHop-HOAP complex recruits the MTV complex, consisting of moi/modigliani, tea and ver/verrocchio, to telomeres, forming the terminin telomere-capping complex. Interacts with moi/modigliani; the interaction is direct. Interacts with ver/verrochio; the interaction is direct. Interacts with HP6, which is also part of the terminin complex. Interacts (via N-terminus) with peo/pendolino (via N-terminus); the interaction is direct.

Its subcellular location is the nucleus. The protein resides in the chromosome. It is found in the telomere. Part of the HipHop-HOAP complex that recruits the MTV complex to form the terminin telomere-capping complex, which binds to chromosome ends in a sequence-independent manner and prevents telomere fusion. Telomere capping is independent of the origin recognition complex (ORC). This chain is Telomere-binding protein cav, found in Drosophila melanogaster (Fruit fly).